Reading from the N-terminus, the 396-residue chain is NADH-quinone oxidoreductase subunit D (396 aa).

It belongs to the complex I 49 kDa subunit family. As to quaternary structure, NDH-1 is composed of 14 different subunits. Subunits NuoB, C, D, E, F, and G constitute the peripheral sector of the complex.

The protein resides in the cell inner membrane. The catalysed reaction is a quinone + NADH + 5 H(+)(in) = a quinol + NAD(+) + 4 H(+)(out). Its function is as follows. NDH-1 shuttles electrons from NADH, via FMN and iron-sulfur (Fe-S) centers, to quinones in the respiratory chain. The immediate electron acceptor for the enzyme in this species is believed to be ubiquinone. Couples the redox reaction to proton translocation (for every two electrons transferred, four hydrogen ions are translocated across the cytoplasmic membrane), and thus conserves the redox energy in a proton gradient. The polypeptide is NADH-quinone oxidoreductase subunit D (Mesorhizobium japonicum (strain LMG 29417 / CECT 9101 / MAFF 303099) (Mesorhizobium loti (strain MAFF 303099))).